The following is a 101-amino-acid chain: NAD(P)H-quinone oxidoreductase subunit 4L, chloroplastic (101 aa).

The next 3 membrane-spanning stretches (helical) occupy residues 2-22 (ILDSLLILAASVFCIGIYGLI), 32-52 (MSLELLLNAVNINFVAFSNFI), and 64-84 (IFIMTIAAAEAAVGLALILAI).

The protein belongs to the complex I subunit 4L family. As to quaternary structure, NDH is composed of at least 16 different subunits, 5 of which are encoded in the nucleus.

The protein resides in the plastid. It is found in the chloroplast thylakoid membrane. It carries out the reaction a plastoquinone + NADH + (n+1) H(+)(in) = a plastoquinol + NAD(+) + n H(+)(out). The enzyme catalyses a plastoquinone + NADPH + (n+1) H(+)(in) = a plastoquinol + NADP(+) + n H(+)(out). NDH shuttles electrons from NAD(P)H:plastoquinone, via FMN and iron-sulfur (Fe-S) centers, to quinones in the photosynthetic chain and possibly in a chloroplast respiratory chain. The immediate electron acceptor for the enzyme in this species is believed to be plastoquinone. Couples the redox reaction to proton translocation, and thus conserves the redox energy in a proton gradient. The chain is NAD(P)H-quinone oxidoreductase subunit 4L, chloroplastic from Chlorokybus atmophyticus (Soil alga).